The primary structure comprises 380 residues: uncharacterized protein (380 aa).

Residues 1 to 18 (MALRHLALLAGLLVGVAS) form the signal peptide. Residues asparagine 104, asparagine 111, and asparagine 128 are each glycosylated (N-linked (GlcNAc...) asparagine). A helical membrane pass occupies residues 148–168 (LFLGTFFISSGLILSVAGFFY). Disordered regions lie at residues 229-256 (PQTG…QGQG) and 336-380 (RFSG…ISNV). Residues 240–249 (PPLPGSPGDP) are compositionally biased toward pro residues. Residues 356–366 (VRRERPLDRAT) are compositionally biased toward basic and acidic residues.

Its subcellular location is the membrane. This is an uncharacterized protein from Homo sapiens (Human).